The sequence spans 73 residues: Large ribosomal subunit protein bL31 (73 aa).

It belongs to the bacterial ribosomal protein bL31 family. Type A subfamily. Part of the 50S ribosomal subunit. Contacts protein L9.

Binds the 23S rRNA and interacts with the tRNA in the E site. This is Large ribosomal subunit protein bL31 (rpmE) from Deinococcus radiodurans (strain ATCC 13939 / DSM 20539 / JCM 16871 / CCUG 27074 / LMG 4051 / NBRC 15346 / NCIMB 9279 / VKM B-1422 / R1).